We begin with the raw amino-acid sequence, 269 residues long: Probable aquaporin TIP5-1 (269 aa).

5 consecutive transmembrane segments (helical) span residues 19-39 (AYFA…GSTI), 54-74 (SLMA…FIAA), 84-104 (AVTF…IFYW), 139-159 (FGAG…VHVA), and 177-197 (ALGA…AGSL). Residues 82-84 (NPA) carry the NPA 1 motif. The NPA 2 signature appears at 203–205 (NPA). The helical transmembrane segment at 223–243 (YWAGPMVGAAVAALVHQALVF) threads the bilayer.

Belongs to the MIP/aquaporin (TC 1.A.8) family. TIP (TC 1.A.8.10) subfamily. In terms of tissue distribution, expressed in leaves and anthers, and at lower levels in roots.

It localises to the vacuole membrane. Functionally, aquaporins facilitate the transport of water and small neutral solutes across cell membranes. May be involved in transport from the vacuolar compartment to the cytoplasm. The protein is Probable aquaporin TIP5-1 (TIP5;1) of Oryza sativa subsp. japonica (Rice).